Consider the following 627-residue polypeptide: MRRFTVPCILRHRISILSGAGYSPAAARLSSLAQTSTPESVLPPITSEILLESIRSSQWHIVEHVADKLTPSLVSTTLLSLVKTPNLAFNFVNHIDLYRLDFQTQCLAIAVISKLSSPKPVTQLLKEVVTSRKNSIRNLFDELVLAHDRLETKSTILFDLLVRCCCQLRMVDEAIECFYLMKEKGFYPKTETCNHILTLLSRLNRIENAWVFYADMYRMEIKSNVYTFNIMINVLCKEGKLKKAKGFLGIMEVFGIKPTIVTYNTLVQGFSLRGRIEGARLIISEMKSKGFQPDMQTYNPILSWMCNEGRASEVLREMKEIGLVPDSVSYNILIRGCSNNGDLEMAFAYRDEMVKQGMVPTFYTYNTLIHGLFMENKIEAAEILIREIREKGIVLDSVTYNILINGYCQHGDAKKAFALHDEMMTDGIQPTQFTYTSLIYVLCRKNKTREADELFEKVVGKGMKPDLVMMNTLMDGHCAIGNMDRAFSLLKEMDMMSINPDDVTYNCLMRGLCGEGKFEEARELMGEMKRRGIKPDHISYNTLISGYSKKGDTKHAFMVRDEMLSLGFNPTLLTYNALLKGLSKNQEGELAEELLREMKSEGIVPNDSSFCSVIEAMSNLDAKKSDS.

A mitochondrion-targeting transit peptide spans 1-29 (MRRFTVPCILRHRISILSGAGYSPAAARL). PPR repeat units follow at residues 154–188 (STIL…GFYP), 189–223 (KTET…EIKS), 224–258 (NVYT…GIKP), 259–293 (TIVT…GFQP), 294–324 (DMQT…IGLV), 326–360 (DSVS…GMVP), 361–395 (TFYT…GIVL), 396–430 (DSVT…GIQP), 431–465 (TQFT…GMKP), 466–500 (DLVM…SINP), 501–535 (DDVT…GIKP), 536–570 (DHIS…GFNP), and 571–605 (TLLT…GIVP).

Belongs to the PPR family. P subfamily.

The protein resides in the mitochondrion. The polypeptide is Pentatricopeptide repeat-containing protein At2g15630, mitochondrial (Arabidopsis thaliana (Mouse-ear cress)).